The chain runs to 845 residues: Translation initiation factor IF-2 (845 aa).

Positions 1–260 are disordered; sequence MSDEQDKPTL…HMTSSGPREK (260 aa). Positions 68 to 81 are enriched in pro residues; sequence APAPAPAAPRPAAP. Basic and acidic residues predominate over residues 101–140; sequence REAEEARMAALEENRRREEAERARAAEEERARAEKREEQA. Composition is skewed to low complexity over residues 141–166 and 173–191; these read ATKAPEPAPTPAASAPDATAADAPPA and TAARPATASAAPAPRRFTP. Basic and acidic residues predominate over residues 194 to 215; that stretch reads ALKRPEPKRPEPKASRGGENRR. In terms of domain architecture, tr-type G spans 344-514; that stretch reads PRAPVVTIMG…ALQAEIMELK (171 aa). Residues 353–360 are G1; it reads GHVDHGKT. 353 to 360 provides a ligand contact to GTP; it reads GHVDHGKT. The G2 stretch occupies residues 378-382; that stretch reads GITQH. Positions 400–403 are G3; sequence DTPG. GTP-binding positions include 400-404 and 454-457; these read DTPGH and NKVD. Residues 454–457 are G4; that stretch reads NKVD. The interval 490–492 is G5; that stretch reads SAL.

The protein belongs to the TRAFAC class translation factor GTPase superfamily. Classic translation factor GTPase family. IF-2 subfamily.

The protein localises to the cytoplasm. One of the essential components for the initiation of protein synthesis. Protects formylmethionyl-tRNA from spontaneous hydrolysis and promotes its binding to the 30S ribosomal subunits. Also involved in the hydrolysis of GTP during the formation of the 70S ribosomal complex. The polypeptide is Translation initiation factor IF-2 (Sphingopyxis alaskensis (strain DSM 13593 / LMG 18877 / RB2256) (Sphingomonas alaskensis)).